We begin with the raw amino-acid sequence, 775 residues long: Thiamine repressible genes regulatory protein thi1 (775 aa).

The zn(2)-C6 fungal-type DNA-binding region spans 39–65; that stretch reads CKHCRQKKIKCNGGQPCISCKTLNIEC. Residue Ser-208 is modified to Phosphoserine. Disordered regions lie at residues 676 to 695 and 754 to 775; these read LTGESSNGSNSTPNEAFQPF and NVSEQSSHTAEQTSNLTLEKNG.

Its subcellular location is the nucleus. In terms of biological role, transcription factor that activates the nmt1 promoter. Regulation of thiamine repressible genes. Positively regulates conjugation during meiosis. The polypeptide is Thiamine repressible genes regulatory protein thi1 (thi1) (Schizosaccharomyces pombe (strain 972 / ATCC 24843) (Fission yeast)).